The primary structure comprises 187 residues: Glutathione peroxidase 7 (187 aa).

The first 19 residues, 1-19, serve as a signal peptide directing secretion; that stretch reads MVAATVAAAWLLLWAAACA. Residue Cys57 is part of the active site.

It belongs to the glutathione peroxidase family. In terms of tissue distribution, expressed in esophageal epithelial cells; expression is up-regulated after exposure to acidic bile acids.

It localises to the secreted. It catalyses the reaction 2 glutathione + H2O2 = glutathione disulfide + 2 H2O. In terms of biological role, it protects esophageal epithelia from hydrogen peroxide-induced oxidative stress. It suppresses acidic bile acid-induced reactive oxygen species (ROS) and protects against oxidative DNA damage and double-strand breaks. In Homo sapiens (Human), this protein is Glutathione peroxidase 7 (GPX7).